The following is a 223-amino-acid chain: Putative germin-like protein 2-2 (223 aa).

A signal peptide spans 1 to 28 (MAAVGACFLQQLAVVALLALWCSHGAIA). Cysteine 38 and cysteine 53 form a disulfide bridge. Positions 67–217 (SGLHMAGNTT…AFQVDKNIID (151 aa)) constitute a Cupin type-1 domain. Residues asparagine 74 and asparagine 82 are each glycosylated (N-linked (GlcNAc...) asparagine). Mn(2+) contacts are provided by histidine 115, histidine 117, glutamate 122, and histidine 163. Asparagine 168 carries N-linked (GlcNAc...) asparagine glycosylation.

This sequence belongs to the germin family. In terms of assembly, oligomer (believed to be a pentamer but probably hexamer).

It localises to the secreted. The protein localises to the extracellular space. Its subcellular location is the apoplast. Functionally, may play a role in plant defense. Probably has no oxalate oxidase activity even if the active site is conserved. This Oryza sativa subsp. japonica (Rice) protein is Putative germin-like protein 2-2.